The sequence spans 295 residues: Acetylglutamate kinase (295 aa).

Residues 66–67, Arg-88, and Asn-193 each bind substrate; that span reads GG.

It belongs to the acetylglutamate kinase family. ArgB subfamily.

The protein localises to the cytoplasm. It carries out the reaction N-acetyl-L-glutamate + ATP = N-acetyl-L-glutamyl 5-phosphate + ADP. Its pathway is amino-acid biosynthesis; L-arginine biosynthesis; N(2)-acetyl-L-ornithine from L-glutamate: step 2/4. Its function is as follows. Catalyzes the ATP-dependent phosphorylation of N-acetyl-L-glutamate. In Rhizobium rhizogenes (strain K84 / ATCC BAA-868) (Agrobacterium radiobacter), this protein is Acetylglutamate kinase.